The primary structure comprises 208 residues: Small ribosomal subunit protein uS4 (208 aa).

The 64-residue stretch at 98-161 (RRLDNVIYRL…RKIPVIAEAQ (64 aa)) folds into the S4 RNA-binding domain.

Belongs to the universal ribosomal protein uS4 family. As to quaternary structure, part of the 30S ribosomal subunit. Contacts protein S5. The interaction surface between S4 and S5 is involved in control of translational fidelity.

Its function is as follows. One of the primary rRNA binding proteins, it binds directly to 16S rRNA where it nucleates assembly of the body of the 30S subunit. In terms of biological role, with S5 and S12 plays an important role in translational accuracy. The protein is Small ribosomal subunit protein uS4 of Nitratidesulfovibrio vulgaris (strain DSM 19637 / Miyazaki F) (Desulfovibrio vulgaris).